The following is a 224-amino-acid chain: MPGGLLLGDEAPNFEANTTVGRIRFHDFLGDSWGILFSHPRDFTPVCTTELGRAAKLAPEFAKRNVKLIALSIDSVEDHLAWSKDTNAYNCEEPTEKLPFPIIDDKNRDLAILLGMLDPAEKDEKGMPVTARVVFVFGPDKKLKLSILYPATTGRNFDEILRVVISLQLTAEKRVATPVDWKDGDSVMVLPTIPEEEAKKLFPKGVFTKELPSGKKYLRYTPQP.

Positions 5 to 169 (LLLGDEAPNF…ILRVVISLQL (165 aa)) constitute a Thioredoxin domain. Residues 31-40 (DSWGILFSHP) are required and sufficient for targeting to lysosomes and lamellar bodies. Thr44 carries the post-translational modification Phosphothreonine. The active-site Cysteine sulfenic acid (-SOH) intermediate; for peroxidase activity is the Cys47. Lys63 is subject to N6-acetyllysine. The residue at position 89 (Tyr89) is a Phosphotyrosine. Asp140 functions as the For phospholipase activity in the catalytic mechanism. Position 177 is a phosphothreonine; by MAPK (Thr177). Lys209 is subject to N6-acetyllysine; alternate. At Lys209 the chain carries N6-succinyllysine; alternate.

Belongs to the peroxiredoxin family. Prx6 subfamily. As to quaternary structure, homodimer. Interacts with GSTP1; mediates PRDX6 glutathionylation and regeneration. Interacts with APEX1. Interacts with STH. May interact with FAM168B. May interact with HTR2A. Irreversibly inactivated by overoxidation of Cys-47 to sulfinic acid (Cys-SO(2)H) and sulfonic acid (Cys-SO(3)H) forms upon oxidative stress. Post-translationally, phosphorylation at Thr-177 by MAP kinases increases the phospholipase activity of the enzyme. The phosphorylated form exhibits a greater lysophosphatidylcholine acyltransferase activity compared to the non-phosphorylated form.

The protein localises to the cytoplasm. It localises to the lysosome. The catalysed reaction is a hydroperoxide + 2 glutathione = an alcohol + glutathione disulfide + H2O. The enzyme catalyses a 1,2-diacyl-sn-glycero-3-phosphocholine + H2O = a 1-acyl-sn-glycero-3-phosphocholine + a fatty acid + H(+). It catalyses the reaction a 1-acyl-sn-glycero-3-phosphocholine + an acyl-CoA = a 1,2-diacyl-sn-glycero-3-phosphocholine + CoA. It carries out the reaction 1-hexadecanoyl-sn-glycero-3-phosphocholine + hexadecanoyl-CoA = 1,2-dihexadecanoyl-sn-glycero-3-phosphocholine + CoA. The catalysed reaction is 1,2-dihexadecanoyl-sn-glycero-3-phosphocholine + H2O = 1-hexadecanoyl-sn-glycero-3-phosphocholine + hexadecanoate + H(+). Functionally, thiol-specific peroxidase that catalyzes the reduction of hydrogen peroxide and organic hydroperoxides to water and alcohols, respectively. Can reduce H(2)O(2) and short chain organic, fatty acid, and phospholipid hydroperoxides. Also has phospholipase activity, and can therefore either reduce the oxidized sn-2 fatty acyl group of phospholipids (peroxidase activity) or hydrolyze the sn-2 ester bond of phospholipids (phospholipase activity). These activities are dependent on binding to phospholipids at acidic pH and to oxidized phospholipds at cytosolic pH. Plays a role in cell protection against oxidative stress by detoxifying peroxides and in phospholipid homeostasis. Exhibits acyl-CoA-dependent lysophospholipid acyltransferase which mediates the conversion of lysophosphatidylcholine (1-acyl-sn-glycero-3-phosphocholine or LPC) into phosphatidylcholine (1,2-diacyl-sn-glycero-3-phosphocholine or PC). Shows a clear preference for LPC as the lysophospholipid and for palmitoyl CoA as the fatty acyl substrate. In Macaca fascicularis (Crab-eating macaque), this protein is Peroxiredoxin-6 (PRDX6).